We begin with the raw amino-acid sequence, 297 residues long: Dehydrodolichyl diphosphate synthase complex subunit Nus1 (297 aa).

2 helical membrane passes run Leu7–Leu26 and Cys40–Leu56. A compositionally biased stretch (basic residues) spans Gly63–His73. A disordered region spans residues Gly63 to His86. A helical transmembrane segment spans residues Ile121–Tyr139. N-linked (GlcNAc...) asparagine glycosylation is found at Asn148 and Asn275. The RXG motif; crucial for prenyltransferase activity signature appears at Arg294–Gly296. Isopentenyl diphosphate is bound by residues Leu295 and Gly296.

This sequence belongs to the UPP synthase family. In terms of assembly, the active dehydrodolichyl diphosphate synthase complex is a heterotetramer composed of a dimer of heterodimer of DHDDS and NUS1. Interacts with NPC2. Mg(2+) serves as cofactor. Highly expressed in heart, liver, kidney and pancreas.

It localises to the endoplasmic reticulum membrane. It carries out the reaction n isopentenyl diphosphate + (2E,6E)-farnesyl diphosphate = a di-trans,poly-cis-polyprenyl diphosphate + n diphosphate. It functions in the pathway protein modification; protein glycosylation. The protein operates within lipid metabolism. With DHDDS, forms the dehydrodolichyl diphosphate synthase (DDS) complex, an essential component of the dolichol monophosphate (Dol-P) biosynthetic machinery. Both subunits contribute to enzymatic activity, i.e. condensation of multiple copies of isopentenyl pyrophosphate (IPP) to farnesyl pyrophosphate (FPP) to produce dehydrodolichyl diphosphate (Dedol-PP), a precursor of dolichol phosphate which is utilized as a sugar carrier in protein glycosylation in the endoplasmic reticulum (ER). Synthesizes long-chain polyprenols, mostly of C95 and C100 chain length. Regulates the glycosylation and stability of nascent NPC2, thereby promoting trafficking of LDL-derived cholesterol. Acts as a specific receptor for the N-terminus of Nogo-B, a neural and cardiovascular regulator. This chain is Dehydrodolichyl diphosphate synthase complex subunit Nus1, found in Mus musculus (Mouse).